Consider the following 498-residue polypeptide: MRINPTTSGPGVSALEKKNLGHIAQIIGPVLDVVFPPGKMPNIYNALVVKGRDTVSQQINVTCEVQQLLGNNRVRAVAMSATDGLMRGMEVIDTGAPLSVPVGGATLGRIFNVLGEPVDDLGPVDTQITSPIHRSAPAFIQLDTKLSIFETGIKVVDLLAPYRRGGKIGLFGGAGVGKTVLIMELINNIAKAHGGVSVFGGVGERTREGNDLYMEMKESGVINEENIAESKVALVYGQMNEPPGARMRVGLTALTMAEYFRDVNEQDVLLFIDNIFRFVQAGSEVSALLGRMPSAVGYQPTLSTEMGTLQERITSTKEGSITSIQAVYVPADDLTDPAPATTFAHLDATTVLSRGLAAKGIYPAVDPLDSTSTMLQPQIVGEEHYETAQRVKQTLQRYKELQDIIAILGLDELSEEDRLTVARARKIERFLSQPFFVAEVFTGSPGKYVGLAETIRGFKLILSGELDSLPEQAFYLVGNIDEATAKATNLEMENNLKK.

Position 172 to 179 (172 to 179 (GGAGVGKT)) interacts with ATP.

The protein belongs to the ATPase alpha/beta chains family. F-type ATPases have 2 components, CF(1) - the catalytic core - and CF(0) - the membrane proton channel. CF(1) has five subunits: alpha(3), beta(3), gamma(1), delta(1), epsilon(1). CF(0) has four main subunits: a(1), b(1), b'(1) and c(9-12).

Its subcellular location is the plastid. The protein resides in the chloroplast thylakoid membrane. It carries out the reaction ATP + H2O + 4 H(+)(in) = ADP + phosphate + 5 H(+)(out). Functionally, produces ATP from ADP in the presence of a proton gradient across the membrane. The catalytic sites are hosted primarily by the beta subunits. The chain is ATP synthase subunit beta, chloroplastic from Populus trichocarpa (Western balsam poplar).